The following is a 163-amino-acid chain: Endoribonuclease YbeY (163 aa).

Zn(2+) contacts are provided by H123, H127, and H133.

It belongs to the endoribonuclease YbeY family. Zn(2+) serves as cofactor.

Its subcellular location is the cytoplasm. Functionally, single strand-specific metallo-endoribonuclease involved in late-stage 70S ribosome quality control and in maturation of the 3' terminus of the 16S rRNA. In Helicobacter hepaticus (strain ATCC 51449 / 3B1), this protein is Endoribonuclease YbeY.